The primary structure comprises 2146 residues: Phospholipid-transporting ATPase ABCA7 (2146 aa).

A helical membrane pass occupies residues 22 to 42; that stretch reads PVQLLVELLWPLFLFFILVAV. The Extracellular segment spans residues 43 to 549; sequence RHSHPPLEHH…DVFLRVLSRS (507 aa). Cysteine 75 and cysteine 225 are oxidised to a cystine. N-linked (GlcNAc...) asparagine glycosylation is present at asparagine 312. A run of 6 helical transmembrane segments spans residues 550 to 570, 593 to 613, 626 to 646, 655 to 675, 687 to 707, and 727 to 747; these read LPLF…KAVV, LGWF…LVLV, GVVF…SFLL, LAAA…VLCV, VAAS…LALL, and VFSL…YGLA. An ABC transporter 1 domain is found at 807–1038; sequence VSVRSLEKRF…LGSGYYLTLV (232 aa). An ATP-binding site is contributed by 841 to 848; that stretch reads GHNGAGKT. The helical transmembrane segment at 849–869 threads the bilayer; that stretch reads TTLSILSGLFPPSGGSAFILG. Residues 1048-1066 show a composition bias toward basic and acidic residues; sequence EKADTDMEGSVDTRQEKKN. Disordered regions lie at residues 1048–1072 and 1185–1209; these read EKAD…QGSR and TALE…DAVG. The chain crosses the membrane as a helical span at residues 1243–1263; it reads IVLPALFVGLALVFSLIVPPF. Residues 1264-1537 are Extracellular-facing; the sequence is GHYPALRLSP…ALMASSVDVL (274 aa). An intrachain disulfide couples cysteine 1345 to cysteine 1359. Helical transmembrane passes span 1538-1558, 1584-1604, 1621-1641, 1649-1669, 1683-1703, and 1729-1749; these read VSIC…LVLI, FLWD…IFLA, LLLL…SFFF, VVLT…TFVL, ILKQ…LIDM, and VVGK…LFTL. The ABC transporter 2 domain maps to 1793-2025; it reads LVLRNLTKVY…FAAGHTLTLR (233 aa). Residue 1827–1834 coordinates ATP; sequence GVNGAGKT. The tract at residues 2104–2146 is disordered; it reads QGKDEDTEEQKEAGVGVDPAPGLQHPKRVSQFLDDPSTAETVL.

It belongs to the ABC transporter superfamily. ABCA family. Post-translationally, N-glycosylated. Expressed in leukocytes (at protein level). Widely expressed. Highly expressed in myelo-lymphatic tissues including peripheral leukocytes, thymus, spleen and bone marrow. Expressed in the hippocampus and the cerebellum. Isoform 2: Abundant in lymph node, spleen, thymus and trachea. Isoform 1: Strongly expressed in brain and bone marrow.

Its subcellular location is the cell membrane. It is found in the golgi apparatus membrane. The protein resides in the early endosome membrane. It localises to the cytoplasm. The protein localises to the cell projection. Its subcellular location is the ruffle membrane. It is found in the phagocytic cup. The protein resides in the endoplasmic reticulum. It carries out the reaction ATP + H2O + phospholipidSide 1 = ADP + phosphate + phospholipidSide 2.. The enzyme catalyses a 1,2-diacyl-sn-glycero-3-phosphocholine(out) + ATP + H2O = a 1,2-diacyl-sn-glycero-3-phosphocholine(in) + ADP + phosphate + H(+). It catalyses the reaction a 1,2-diacyl-sn-glycero-3-phospho-L-serine(out) + ATP + H2O = a 1,2-diacyl-sn-glycero-3-phospho-L-serine(in) + ADP + phosphate + H(+). With respect to regulation, ATPase activity is decreased by cholesterol and ceramide. ATPase activity is stimulated by phosphatidylserine, phosphatidylcholine and sphingomyelin, but phosphatidylserine is more effective. Its function is as follows. Catalyzes the translocation of specific phospholipids from the cytoplasmic to the extracellular/lumenal leaflet of membrane coupled to the hydrolysis of ATP. Transports preferentially phosphatidylserine over phosphatidylcholine. Plays a role in lipid homeostasis and macrophage-mediated phagocytosis. Binds APOA1 and may function in apolipoprotein-mediated phospholipid efflux from cells. May also mediate cholesterol efflux. May regulate cellular ceramide homeostasis during keratinocyte differentiation. Involved in lipid raft organization and CD1D localization on thymocytes and antigen-presenting cells, which plays an important role in natural killer T-cell development and activation. Plays a role in phagocytosis of apoptotic cells by macrophages. Macrophage phagocytosis is stimulated by APOA1 or APOA2, probably by stabilization of ABCA7. Also involved in phagocytic clearance of amyloid-beta by microglia cells and macrophages. Further limits amyloid-beta production by playing a role in the regulation of amyloid-beta A4 precursor protein (APP) endocytosis and/or processing. Amyloid-beta is the main component of amyloid plaques found in the brains of Alzheimer patients. In Homo sapiens (Human), this protein is Phospholipid-transporting ATPase ABCA7.